Reading from the N-terminus, the 297-residue chain is D-alanine--D-alanine ligase (297 aa).

Residues 95 to 294 (KMLWKAFGLP…FEQLVVKILE (200 aa)) enclose the ATP-grasp domain. ATP is bound at residue 125 to 180 (VAKLGLPLMVKPSLEGSSVGLTKVKAVEELKSAVEYALKFDNTILIEEWLAGDELT). Mg(2+) contacts are provided by Asp248, Glu261, and Asn263.

Belongs to the D-alanine--D-alanine ligase family. The cofactor is Mg(2+). Mn(2+) serves as cofactor.

Its subcellular location is the cytoplasm. It carries out the reaction 2 D-alanine + ATP = D-alanyl-D-alanine + ADP + phosphate + H(+). It functions in the pathway cell wall biogenesis; peptidoglycan biosynthesis. Cell wall formation. The chain is D-alanine--D-alanine ligase from Haemophilus influenzae (strain PittEE).